We begin with the raw amino-acid sequence, 660 residues long: PAN2-PAN3 deadenylation complex subunit PAN3 (660 aa).

A C3H1-type zinc finger spans residues 7–36; the sequence is SAKDTFCKNVLIYGYCKYENKGCAFSHTVK. 2 disordered regions span residues 36–60 and 150–186; these read KPTSSVPGSQGSNATTNSSGNTNAD and SPVMAQSVSTPGAKANGNIQHNPYLPGNAGTPQPTSA. Over residues 43–59 the composition is skewed to low complexity; the sequence is GSQGSNATTNSSGNTNA. The PABPC-interacting motif-2 (PAM-2) motif lies at 59 to 79; that stretch reads ADMKKKFNFNTPSFQPSTVPN. The span at 150-159 shows a compositional bias: polar residues; the sequence is SPVMAQSVST. A pseudokinase domain region spans residues 252–528; the sequence is QTLPRSNLPD…LQEFNRNHLS (277 aa). ATP is bound by residues Arg-304, 358–365, and 415–416; these read DYFPNSNT and SK. Residues 529-567 adopt a coiled-coil conformation; sequence RRILNFCSNAQDSQDFMESQLSTELENARVFRLITKLNF. The interval 568-660 is knob domain; it reads IIDRPEYDND…DSAFRTLTRG (93 aa).

This sequence belongs to the protein kinase superfamily. PAN3 family. Homodimer. Forms a heterotrimer with a catalytic subunit PAN2 to form the poly(A)-nuclease (PAN) deadenylation complex. Interacts (via PAM-2 motif) with poly(A)-binding protein PAB1 (via PABC domain), conferring substrate specificity of the enzyme complex.

The protein resides in the cytoplasm. In terms of biological role, regulatory subunit of the poly(A)-nuclease (PAN) deadenylation complex, one of two cytoplasmic mRNA deadenylases involved in mRNA turnover. PAN specifically shortens poly(A) tails of RNA and the activity is stimulated by poly(A)-binding protein PAB1. PAN deadenylation is followed by rapid degradation of the shortened mRNA tails by the CCR4-NOT complex. Deadenylated mRNAs are then degraded by two alternative mechanisms, namely exosome-mediated 3'-5' exonucleolytic degradation, or deadenylation-dependent mRNA decaping and subsequent 5'-3' exonucleolytic degradation by XRN1. May also be involved in post-transcriptional maturation of mRNA poly(A) tails. PAN3 acts as a positive regulator for PAN activity, recruiting the catalytic subunit PAN2 to mRNA via its interaction with RNA and with PAB1. This chain is PAN2-PAN3 deadenylation complex subunit PAN3, found in Debaryomyces hansenii (strain ATCC 36239 / CBS 767 / BCRC 21394 / JCM 1990 / NBRC 0083 / IGC 2968) (Yeast).